Reading from the N-terminus, the 556-residue chain is Arginine--tRNA ligase (556 aa).

Positions 132–142 match the 'HIGH' region motif; the sequence is ANPTGDLHLGH.

This sequence belongs to the class-I aminoacyl-tRNA synthetase family. In terms of assembly, monomer.

The protein localises to the cytoplasm. The catalysed reaction is tRNA(Arg) + L-arginine + ATP = L-arginyl-tRNA(Arg) + AMP + diphosphate. The protein is Arginine--tRNA ligase of Bacillus cereus (strain ATCC 10987 / NRS 248).